The chain runs to 527 residues: TnpB-like protein R854 (527 aa).

A compositionally biased stretch (basic residues) spans 21 to 36; the sequence is GSKTKKKVFVKKKPPA. The disordered stretch occupies residues 21–50; that stretch reads GSKTKKKVFVKKKPPAKKPPDKKPLKKTTK. The Zn(2+) site is built by Cys481, Cys484, Cys498, and Cys501.

The protein in the central section; belongs to the transposase 2 family. It in the C-terminal section; belongs to the transposase 35 family.

In Acanthamoeba polyphaga mimivirus (APMV), this protein is TnpB-like protein R854.